Consider the following 283-residue polypeptide: Phosphatidylserine decarboxylase proenzyme (283 aa).

Active-site charge relay system; for autoendoproteolytic cleavage activity residues include D96, H152, and S250. Residue S250 is the Schiff-base intermediate with substrate; via pyruvic acid; for decarboxylase activity of the active site. The residue at position 250 (S250) is a Pyruvic acid (Ser); by autocatalysis.

It belongs to the phosphatidylserine decarboxylase family. PSD-B subfamily. Prokaryotic type I sub-subfamily. As to quaternary structure, heterodimer of a large membrane-associated beta subunit and a small pyruvoyl-containing alpha subunit. It depends on pyruvate as a cofactor. Post-translationally, is synthesized initially as an inactive proenzyme. Formation of the active enzyme involves a self-maturation process in which the active site pyruvoyl group is generated from an internal serine residue via an autocatalytic post-translational modification. Two non-identical subunits are generated from the proenzyme in this reaction, and the pyruvate is formed at the N-terminus of the alpha chain, which is derived from the carboxyl end of the proenzyme. The autoendoproteolytic cleavage occurs by a canonical serine protease mechanism, in which the side chain hydroxyl group of the serine supplies its oxygen atom to form the C-terminus of the beta chain, while the remainder of the serine residue undergoes an oxidative deamination to produce ammonia and the pyruvoyl prosthetic group on the alpha chain. During this reaction, the Ser that is part of the protease active site of the proenzyme becomes the pyruvoyl prosthetic group, which constitutes an essential element of the active site of the mature decarboxylase.

Its subcellular location is the cell membrane. It catalyses the reaction a 1,2-diacyl-sn-glycero-3-phospho-L-serine + H(+) = a 1,2-diacyl-sn-glycero-3-phosphoethanolamine + CO2. Its pathway is phospholipid metabolism; phosphatidylethanolamine biosynthesis; phosphatidylethanolamine from CDP-diacylglycerol: step 2/2. Catalyzes the formation of phosphatidylethanolamine (PtdEtn) from phosphatidylserine (PtdSer). This is Phosphatidylserine decarboxylase proenzyme from Acinetobacter baumannii (strain AB0057).